A 181-amino-acid chain; its full sequence is TATA-box-binding protein (181 aa).

2 tandem repeats follow at residues 7 to 83 (IVNV…IKEL) and 98 to 173 (VQNM…LSTL).

It belongs to the TBP family.

Functionally, general factor that plays a role in the activation of archaeal genes transcribed by RNA polymerase. Binds specifically to the TATA box promoter element which lies close to the position of transcription initiation. This chain is TATA-box-binding protein (tbp), found in Methanothermococcus thermolithotrophicus (Methanococcus thermolithotrophicus).